We begin with the raw amino-acid sequence, 56 residues long: Hydrophobic protein LTI6A (56 aa).

Transmembrane regions (helical) follow at residues 11 to 31 (IILA…CGIE) and 34 to 54 (ICLL…VWVI).

It belongs to the UPF0057 (PMP3) family. In terms of tissue distribution, expressed in shoot of cold stressed seedlings.

It is found in the membrane. In terms of biological role, plays a role in the regulation of membrane potential. Could mediate a proton leak. This is Hydrophobic protein LTI6A (LTI6A) from Oryza sativa subsp. japonica (Rice).